The following is a 125-amino-acid chain: UPF0738 protein GTNG_0708 (125 aa).

Belongs to the UPF0738 family.

The protein is UPF0738 protein GTNG_0708 of Geobacillus thermodenitrificans (strain NG80-2).